The primary structure comprises 697 residues: U-box domain-containing protein 18 (697 aa).

A U-box N-terminal domain (UND) required for EXO70B1 binding and crucial for the negative regulation of ABA-dependent stomatal movement region spans residues 23–210 (SISIVTLLDS…INRILDHVGI (188 aa)). The 75-residue stretch at 287-361 (LKVEDLLCPI…RKHCKTNGIV (75 aa)) folds into the U-box domain. 6 ARM repeats span residues 420–459 (SFNRSCLVKAGAVTPLLKLLSSVDIRIQENAMAGILNLSK), 461–500 (VTGKSKIAGEGLKILVEILNEGAKTETRLYSASALFYLSS), 502–544 (EDYS…GLLM), 546–587 (SDNH…KLAE), 589–631 (PDGT…NLCL), and 657–696 (NGEYGGSKKASALIRMIHEFQERKTGSVEPNLQRGRFVHA).

In terms of assembly, interacts with EXO70B1 via its U-box N-terminal domain (UND).

It localises to the endomembrane system. The catalysed reaction is S-ubiquitinyl-[E2 ubiquitin-conjugating enzyme]-L-cysteine + [acceptor protein]-L-lysine = [E2 ubiquitin-conjugating enzyme]-L-cysteine + N(6)-ubiquitinyl-[acceptor protein]-L-lysine.. It functions in the pathway protein modification; protein ubiquitination. In terms of biological role, functions as an E3 ubiquitin ligase. Mediates EXO70B1 ubiquitination. Involved in the regulation of abscisic acid (ABA)-mediated stomatal movements. The protein is U-box domain-containing protein 18 of Arabidopsis thaliana (Mouse-ear cress).